The following is a 171-amino-acid chain: MVKYSQEPGNPTKSAKAMGRDLRVHFKNTRETAFALRKLPLTKAKRYLEDVIAHKQAIPFRRYCGGVGRTAQAKSRHSNGQGRWPVKSARFILDLLKNAESNADVKGLDVDNLYVSHIQVNQAQKQRRRTYRAHGRINPYMSSPCHIELILSEKEEPVKKEADNIVAARKQ.

Belongs to the universal ribosomal protein uL22 family.

The chain is Large ribosomal subunit protein uL22 (RPL17) from Zea mays (Maize).